The following is a 302-amino-acid chain: UDP-3-O-acyl-N-acetylglucosamine deacetylase (302 aa).

Residues H78, H235, and D239 each contribute to the Zn(2+) site. H262 acts as the Proton donor in catalysis.

It belongs to the LpxC family. Requires Zn(2+) as cofactor.

It carries out the reaction a UDP-3-O-[(3R)-3-hydroxyacyl]-N-acetyl-alpha-D-glucosamine + H2O = a UDP-3-O-[(3R)-3-hydroxyacyl]-alpha-D-glucosamine + acetate. It functions in the pathway glycolipid biosynthesis; lipid IV(A) biosynthesis; lipid IV(A) from (3R)-3-hydroxytetradecanoyl-[acyl-carrier-protein] and UDP-N-acetyl-alpha-D-glucosamine: step 2/6. Its function is as follows. Catalyzes the hydrolysis of UDP-3-O-myristoyl-N-acetylglucosamine to form UDP-3-O-myristoylglucosamine and acetate, the committed step in lipid A biosynthesis. In Bdellovibrio bacteriovorus (strain ATCC 15356 / DSM 50701 / NCIMB 9529 / HD100), this protein is UDP-3-O-acyl-N-acetylglucosamine deacetylase.